The chain runs to 958 residues: Isoleucine--tRNA ligase (958 aa).

A disordered region spans residues 1 to 32 (MSDNQNKPGKPAAKPQSKYPVNMTDTPFPMRG). A 'HIGH' region motif is present at residues 71-81 (PYANGDIHLGH). E590 lines the L-isoleucyl-5'-AMP pocket. Positions 631-635 (KMSKS) match the 'KMSKS' region motif. K634 provides a ligand contact to ATP. Residues C921, C924, C941, and C944 each contribute to the Zn(2+) site.

This sequence belongs to the class-I aminoacyl-tRNA synthetase family. IleS type 1 subfamily. As to quaternary structure, monomer. Zn(2+) serves as cofactor.

It is found in the cytoplasm. The enzyme catalyses tRNA(Ile) + L-isoleucine + ATP = L-isoleucyl-tRNA(Ile) + AMP + diphosphate. Its function is as follows. Catalyzes the attachment of isoleucine to tRNA(Ile). As IleRS can inadvertently accommodate and process structurally similar amino acids such as valine, to avoid such errors it has two additional distinct tRNA(Ile)-dependent editing activities. One activity is designated as 'pretransfer' editing and involves the hydrolysis of activated Val-AMP. The other activity is designated 'posttransfer' editing and involves deacylation of mischarged Val-tRNA(Ile). In Janthinobacterium sp. (strain Marseille) (Minibacterium massiliensis), this protein is Isoleucine--tRNA ligase.